The primary structure comprises 156 residues: Endoribonuclease YbeY (156 aa).

Residues H111, H115, and H121 each contribute to the Zn(2+) site.

Belongs to the endoribonuclease YbeY family. It depends on Zn(2+) as a cofactor.

The protein resides in the cytoplasm. Functionally, single strand-specific metallo-endoribonuclease involved in late-stage 70S ribosome quality control and in maturation of the 3' terminus of the 16S rRNA. This is Endoribonuclease YbeY from Hahella chejuensis (strain KCTC 2396).